The primary structure comprises 239 residues: Tetraspanin-9 (239 aa).

The Cytoplasmic segment spans residues 1-13 (MARGCLCCLKYMM). A helical membrane pass occupies residues 14–34 (FLFNLIFWLCGCGLLGVGIWL). The Extracellular segment spans residues 35-55 (SVSQGNFATFSPSFPSLSAAN). A helical membrane pass occupies residues 56-76 (LVIAIGTIVMVTGFLGCLGAI). The Cytoplasmic segment spans residues 77–85 (KENKCLLLS). The chain crosses the membrane as a helical span at residues 86–106 (FFIILLIILLAELILLILFFV). Over 107–203 (YMDKVNENAK…VKMWFDDNKH (97 aa)) the chain is Extracellular. Asparagine 180 is a glycosylation site (N-linked (GlcNAc...) asparagine). A helical membrane pass occupies residues 204 to 224 (VLGTIGMCILIIQILGMAFSM). Residues 225 to 239 (TLFQQIHRTGKKYDA) are Cytoplasmic-facing.

This sequence belongs to the tetraspanin (TM4SF) family.

It is found in the membrane. This Xenopus tropicalis (Western clawed frog) protein is Tetraspanin-9 (tspan9).